A 267-amino-acid polypeptide reads, in one-letter code: Protein PERCC1 (267 aa).

Disordered regions lie at residues 19 to 88 (HHPF…QLLR), 142 to 163 (SLED…RPGL), and 247 to 267 (ACPE…PAEA). Acidic residues predominate over residues 28-50 (EPPETSEEEEEEEEEEEEEEGEG). Positions 74-83 (PEGPGSPETP) are enriched in low complexity.

Functionally, plays a critical role in intestinal function. Acts by promoting the development of enteroendocrine cells (EECs) of the gastrointestinal tract and pancreas. It is thereby required for normal enteroendocrine peptide hormone secretion. The protein is Protein PERCC1 of Homo sapiens (Human).